The primary structure comprises 425 residues: CAAX prenyl protease 1 homolog (425 aa).

The next 5 helical transmembrane spans lie at 3–23, 62–80, 109–129, 155–175, and 188–208; these read LPYLEAVLCFMILMYIFETYL, FHFIHEAVTILMDTTILYY, LAFLAGVMIWSQITDLPFSLY, GILLSILLGPPIVAAIIIIVQ, and FMFALSLVMMTIYPIVIAPLF. His-284 is a Zn(2+) binding site. The active site involves Glu-285. Position 288 (His-288) interacts with Zn(2+). Helical transmembrane passes span 295 to 315 and 332 to 352; these read VYSFVAVQLLMFLQFGGYTLV and VIIGLIIFQHTIIPVQHLLSF. Glu-362 serves as a coordination point for Zn(2+). Asp-366 serves as the catalytic Proton donor.

This sequence belongs to the peptidase M48A family. The cofactor is Zn(2+).

It localises to the endoplasmic reticulum membrane. The catalysed reaction is Hydrolyzes the peptide bond -P2-(S-farnesyl or geranylgeranyl)C-P1'-P2'-P3'-COOH where P1' and P2' are amino acids with aliphatic side chains and P3' is any C-terminal residue.. Its function is as follows. Proteolytically removes the C-terminal three residues of farnesylated proteins. The protein is CAAX prenyl protease 1 homolog (FACE1) of Oryza sativa subsp. japonica (Rice).